Reading from the N-terminus, the 330-residue chain is Bifunctional pinoresinol-lariciresinol reductase 2 (330 aa).

Residues 28-34, R53, and K62 contribute to the NADP(+) site; that span reads GGTGYLG. K156 (proton acceptor) is an active-site residue. R160 is an NADP(+) binding site. Position 288 (H288) interacts with substrate.

Belongs to the NmrA-type oxidoreductase family. Isoflavone reductase subfamily. As to quaternary structure, dimer. As to expression, expressed in leaves, stems, leaves and seeds.

The catalysed reaction is (+)-lariciresinol + NADP(+) = (+)-pinoresinol + NADPH + H(+). It carries out the reaction (-)-secoisolariciresinol + NADP(+) = (+)-lariciresinol + NADPH + H(+). Functionally, reductase involved in lignan biosynthesis. Catalyzes the enantioselective conversion of (+)-pinoresinol into (+)-lariciresinol and of (+)-lariciresinol into (-)-secoisolariciresinol. Abstracts the 4R-hydride from the NADPH cofactor during catalysis. The polypeptide is Bifunctional pinoresinol-lariciresinol reductase 2 (PLR_Lu2) (Linum usitatissimum (Flax)).